Reading from the N-terminus, the 356-residue chain is GTPase Obg (356 aa).

An Obg domain is found at Glu-2 to Leu-160. Positions Ala-161–Phe-329 constitute an OBG-type G domain. Residues Gly-167–Ser-174, Phe-192–Ser-196, Asp-215–Gly-218, Asn-282–Asp-285, and Ser-310–Asp-312 each bind GTP. Positions 174 and 194 each coordinate Mg(2+).

The protein belongs to the TRAFAC class OBG-HflX-like GTPase superfamily. OBG GTPase family. Monomer. The cofactor is Mg(2+).

The protein localises to the cytoplasm. In terms of biological role, an essential GTPase which binds GTP, GDP and possibly (p)ppGpp with moderate affinity, with high nucleotide exchange rates and a fairly low GTP hydrolysis rate. Plays a role in control of the cell cycle, stress response, ribosome biogenesis and in those bacteria that undergo differentiation, in morphogenesis control. The protein is GTPase Obg of Leptospira interrogans serogroup Icterohaemorrhagiae serovar copenhageni (strain Fiocruz L1-130).